A 275-amino-acid chain; its full sequence is Tropinone reductase-like 2 (275 aa).

Residue 17 to 41 (IITGGASGIGACTAELFHENGAKVV) coordinates NAD(+). Position 150 (Ser150) interacts with substrate. Catalysis depends on Tyr163, which acts as the Proton acceptor.

The protein belongs to the short-chain dehydrogenases/reductases (SDR) family.

Has no tropinone reductase activity. The protein is Tropinone reductase-like 2 of Erythroxylum coca (Coca plant).